We begin with the raw amino-acid sequence, 116 residues long: uncharacterized protein (116 aa).

2 disordered regions span residues 1-26 and 74-116; these read MLLT…KSSN and ENDL…KSSI. A compositionally biased stretch (low complexity) spans 14–26; the sequence is SANSTDDSSKSSN. The segment covering 74-86 has biased composition (basic and acidic residues); sequence ENDLKRSKSQGRE. Residues 104-116 are compositionally biased toward polar residues; sequence NTASEIQRTKSSI.

This is an uncharacterized protein from Saccharomyces cerevisiae (strain ATCC 204508 / S288c) (Baker's yeast).